We begin with the raw amino-acid sequence, 1024 residues long: Beta-galactosidase (1024 aa).

Substrate contacts are provided by N103 and D202. Position 202 (D202) interacts with Na(+). The Mg(2+) site is built by E417, H419, and E462. Residues E462 and 538-541 (EYAH) each bind substrate. E462 (proton donor) is an active-site residue. The Nucleophile role is filled by E538. N598 contributes to the Mg(2+) binding site. 2 residues coordinate Na(+): F602 and N605. 2 residues coordinate substrate: N605 and W1000.

The protein belongs to the glycosyl hydrolase 2 family. Homotetramer. Mg(2+) is required as a cofactor. It depends on Na(+) as a cofactor.

The enzyme catalyses Hydrolysis of terminal non-reducing beta-D-galactose residues in beta-D-galactosides.. The protein is Beta-galactosidase of Escherichia coli (strain SMS-3-5 / SECEC).